A 494-amino-acid polypeptide reads, in one-letter code: Glycerol kinase (494 aa).

ADP is bound at residue threonine 13. ATP contacts are provided by threonine 13, threonine 14, and serine 15. Residue threonine 13 coordinates sn-glycerol 3-phosphate. Position 17 (arginine 17) interacts with ADP. Positions 83, 84, 135, and 244 each coordinate sn-glycerol 3-phosphate. Glycerol-binding residues include arginine 83, glutamate 84, tyrosine 135, aspartate 244, and glutamine 245. Residues threonine 266 and glycine 309 each coordinate ADP. Residues threonine 266, glycine 309, glutamine 313, and glycine 410 each coordinate ATP. Residues glycine 410 and asparagine 414 each coordinate ADP.

The protein belongs to the FGGY kinase family.

The catalysed reaction is glycerol + ATP = sn-glycerol 3-phosphate + ADP + H(+). It functions in the pathway polyol metabolism; glycerol degradation via glycerol kinase pathway; sn-glycerol 3-phosphate from glycerol: step 1/1. Its activity is regulated as follows. Inhibited by fructose 1,6-bisphosphate (FBP). In terms of biological role, key enzyme in the regulation of glycerol uptake and metabolism. Catalyzes the phosphorylation of glycerol to yield sn-glycerol 3-phosphate. The sequence is that of Glycerol kinase from Shewanella oneidensis (strain ATCC 700550 / JCM 31522 / CIP 106686 / LMG 19005 / NCIMB 14063 / MR-1).